The sequence spans 383 residues: Large ribosomal subunit protein uL2m (383 aa).

2 disordered regions span residues 97–122 (FPKKGQSKGGRNHSGRVTVRHRGGGH) and 322–357 (MNANDHPHGGGRGKSKGNRHPVSPWGTPAKGGYKTR). 2 stretches are compositionally biased toward basic residues: residues 106 to 122 (GRNHSGRVTVRHRGGGH) and 330 to 340 (GGGRGKSKGNR).

It belongs to the universal ribosomal protein uL2 family. In terms of assembly, component of the mitochondrial large ribosomal subunit (mt-LSU). Mature N.crassa 74S mitochondrial ribosomes consist of a small (37S) and a large (54S) subunit. The 37S small subunit contains a 16S ribosomal RNA (16S mt-rRNA) and 32 different proteins. The 54S large subunit contains a 23S rRNA (23S mt-rRNA) and 42 different proteins.

It localises to the mitochondrion. Its function is as follows. Component of the mitochondrial ribosome (mitoribosome), a dedicated translation machinery responsible for the synthesis of mitochondrial genome-encoded proteins, including at least some of the essential transmembrane subunits of the mitochondrial respiratory chain. The mitoribosomes are attached to the mitochondrial inner membrane and translation products are cotranslationally integrated into the membrane. The sequence is that of Large ribosomal subunit protein uL2m (rml2) from Neurospora crassa (strain ATCC 24698 / 74-OR23-1A / CBS 708.71 / DSM 1257 / FGSC 987).